The following is a 64-amino-acid chain: Anti-sigma-G factor Gin (64 aa).

Positions 11, 14, 30, and 33 each coordinate Zn(2+).

In terms of assembly, probably functions as a homodimer. Interacts with sigma-G factor, recognition occurs via the first 71 residues of sigma-G. Requires Zn(2+) as cofactor.

In terms of biological role, an anti-sigma-G factor, prevents premature activation of sigma-G factor in the forespore; overexpression leads to 1000-fold reduction in spore formation, spore formation stops after engulfment. Overexpression also inhibits sigma-G transcription activation activity. When both Gin and sigma-G are expressed in E.coli Gin inhibits sigma-G, strongly suggesting Gin inhibits by direct physical interaction. The sequence is that of Anti-sigma-G factor Gin from Bacillus subtilis (strain 168).